A 464-amino-acid polypeptide reads, in one-letter code: Secretion-regulating guanine nucleotide exchange factor (464 aa).

RCC1 repeat units follow at residues 15 to 67 (AVLF…VTDG), 68 to 119 (GDLF…LTEK), 120 to 171 (GQVL…TTAT), 172 to 230 (GSVF…LTDT), 231 to 283 (GELY…KTET), 284 to 351 (GKVF…VIRD), and 352 to 402 (KCCS…LAVC). Residues 422-464 (DDTENTESQGAVDRDRLEGETISDLNPDRTRNGGGGCESETVQ) form a disordered region. A Phosphoserine modification is found at S429.

In terms of assembly, interacts with SEC5. The interaction occurs only in the presence of magnesium or manganese and is stimulated by dCTP or GTP.

It localises to the cytoplasm. Its subcellular location is the nucleus. In terms of biological role, probable guanine nucleotide exchange factor (GEF), which may be involved in the secretion process. The protein is Secretion-regulating guanine nucleotide exchange factor (Sergef) of Mus musculus (Mouse).